A 725-amino-acid polypeptide reads, in one-letter code: Polyribonucleotide nucleotidyltransferase (725 aa).

Mg(2+) is bound by residues D506 and D512. Residues 571-631 (PLIEQFAIDP…QNIIDACEHI (61 aa)) form the KH domain. The S1 motif domain maps to 657-724 (DEVVIGKVER…KKDRIELSSA (68 aa)).

It belongs to the polyribonucleotide nucleotidyltransferase family. The cofactor is Mg(2+).

It is found in the cytoplasm. It catalyses the reaction RNA(n+1) + phosphate = RNA(n) + a ribonucleoside 5'-diphosphate. Its function is as follows. Involved in mRNA degradation. Catalyzes the phosphorolysis of single-stranded polyribonucleotides processively in the 3'- to 5'-direction. The protein is Polyribonucleotide nucleotidyltransferase of Aliarcobacter butzleri (strain RM4018) (Arcobacter butzleri).